The chain runs to 648 residues: ATPase family AAA domain-containing protein 3B (648 aa).

2 disordered regions span residues 1–54 and 111–134; these read MSWL…DPTG and QAEERRKTLSEETRQHQARAQYQD. The residue at position 2 (S2) is an N-acetylserine. The Mitochondrial intermembrane portion of the chain corresponds to 2 to 246; the sequence is SWLFGVNKGP…FRAFVTDRDK (245 aa). Pro residues predominate over residues 17-26; it reads GPPPPLPPAQ. Composition is skewed to basic and acidic residues over residues 32-48 and 111-125; these read GGDRGLGDRPAPKDKWS and QAEERRKTLSEETRQ. A coiled-coil region spans residues 69–214; it reads RYAKEALNLA…DIIREQIRLK (146 aa). Positions 247–264 form an intramembrane region, helical; it reads VTATVAGLTLLAVGVYSA. At 265-648 the chain is on the mitochondrial intermembrane side; sequence KNATAVTGRF…PFCPPGHPLL (384 aa). An ATP-binding site is contributed by 352 to 359; sequence GPPGTGKT. 2 positions are modified to N6-acetyllysine: K427 and K495.

This sequence belongs to the AAA ATPase family. Forms heterooligomers with ATAD3A. Interacts with components of the mitochondrial ribosome, including MRPL11 and MRPS18B, and with other proteins involved in mitochondrial RNA metabolism, possibly via interaction with ATAD3A. Interacts with GADD45GIP1. In terms of tissue distribution, tends to be down-regulated in differentiated cells and re-expressed in pluripotent stem cells or cancer cells (at protein level).

It is found in the mitochondrion inner membrane. May play a role in a mitochondrial network organization typical for stem cells, characterized by reduced mitochondrial metabolism, low mtDNA copies and fragmentated mitochondrial network. May act by suppressing ATAD3A function, interfering with ATAD3A interaction with matrix nucleoid complexes. This chain is ATPase family AAA domain-containing protein 3B (ATAD3B), found in Homo sapiens (Human).